Reading from the N-terminus, the 429-residue chain is Phosphoribosylamine--glycine ligase (429 aa).

The region spanning 109 to 316 is the ATP-grasp domain; sequence KDFLARHKIP…LVELCLKACD (208 aa). An ATP-binding site is contributed by 135–196; it reads LREKGTPIVV…EEFLDGEEAS (62 aa). Mg(2+) is bound by residues Glu286 and Asn288.

The protein belongs to the GARS family. Mg(2+) is required as a cofactor. The cofactor is Mn(2+).

The catalysed reaction is 5-phospho-beta-D-ribosylamine + glycine + ATP = N(1)-(5-phospho-beta-D-ribosyl)glycinamide + ADP + phosphate + H(+). It functions in the pathway purine metabolism; IMP biosynthesis via de novo pathway; N(1)-(5-phospho-D-ribosyl)glycinamide from 5-phospho-alpha-D-ribose 1-diphosphate: step 2/2. In Haemophilus influenzae (strain ATCC 51907 / DSM 11121 / KW20 / Rd), this protein is Phosphoribosylamine--glycine ligase.